The primary structure comprises 338 residues: Acyl-CoA:acyl-CoA alkyltransferase (338 aa).

The Mn(2+) site is built by histidine 18 and aspartate 56. Glutamate 97 acts as the Proton acceptor in catalysis. The Acyl-thioester intermediate role is filled by cysteine 123.

The protein belongs to the thiolase-like superfamily. OleA family. As to quaternary structure, homodimer. Weakly associates with the OleBCD complex.

Its subcellular location is the cytoplasm. The enzyme catalyses a 1,2-saturated acyl-CoA + an acyl-CoA + H2O = an (R)-2-alkyl-3-oxoalkanoate + 2 CoA + H(+). With respect to regulation, inhibited by cerulenin. In terms of biological role, involved in olefin biosynthesis. Catalyzes a non-decarboxylative head-to-head Claisen condensation of two acyl-CoA molecules, generating an (R)-2-alkyl-3-oxoalkanoate. Is active with fatty acyl-CoA substrates that ranged from C(8) to C(16) in length, and is the most active with palmitoyl-CoA and myristoyl-CoA. The protein is Acyl-CoA:acyl-CoA alkyltransferase of Xanthomonas campestris pv. campestris (strain ATCC 33913 / DSM 3586 / NCPPB 528 / LMG 568 / P 25).